The following is a 428-amino-acid chain: UPF0229 protein YeaH (428 aa).

The span at 78-90 shows a compositional bias: basic and acidic residues; sequence GNDHFIQNDRIER. A disordered region spans residues 78-111; sequence GNDHFIQNDRIERPQGGGGGGSGSGQGQASQDGE. A compositionally biased stretch (gly residues) spans 92-103; sequence QGGGGGGSGSGQ.

This sequence belongs to the UPF0229 family.

The protein is UPF0229 protein YeaH of Salmonella enteritidis PT4 (strain P125109).